The chain runs to 198 residues: Proteasome subunit beta 1 (198 aa).

A propeptide spans 1 to 6 (MSGPGA) (removed in mature form; by autocatalysis). Residue threonine 7 is the Nucleophile of the active site.

It belongs to the peptidase T1B family. In terms of assembly, the 20S proteasome core is composed of 14 alpha and 14 beta subunits that assemble into four stacked heptameric rings, resulting in a barrel-shaped structure. The two inner rings, each composed of seven catalytic beta subunits, are sandwiched by two outer rings, each composed of seven alpha subunits. The catalytic chamber with the active sites is on the inside of the barrel. Has a gated structure, the ends of the cylinder being occluded by the N-termini of the alpha-subunits. Is capped at one or both ends by the proteasome regulatory ATPase, PAN.

The protein resides in the cytoplasm. The catalysed reaction is Cleavage of peptide bonds with very broad specificity.. Its activity is regulated as follows. The formation of the proteasomal ATPase PAN-20S proteasome complex, via the docking of the C-termini of PAN into the intersubunit pockets in the alpha-rings, triggers opening of the gate for substrate entry. Interconversion between the open-gate and close-gate conformations leads to a dynamic regulation of the 20S proteasome proteolysis activity. In terms of biological role, component of the proteasome core, a large protease complex with broad specificity involved in protein degradation. This chain is Proteasome subunit beta 1, found in Ignicoccus hospitalis (strain KIN4/I / DSM 18386 / JCM 14125).